Reading from the N-terminus, the 572-residue chain is uncharacterized protein (572 aa).

The segment at 553 to 572 (PSPAPKPVTVRKKKGNSPIS) is disordered. The span at 561 to 572 (TVRKKKGNSPIS) shows a compositional bias: basic residues.

This is an uncharacterized protein from Homo sapiens (Human).